Reading from the N-terminus, the 373-residue chain is Dual-specificity RNA methyltransferase RlmN (373 aa).

The Proton acceptor role is filled by E94. One can recognise a Radical SAM core domain in the interval 100-339 (EEDRATLCVS…VIVRKTRGDD (240 aa)). A disulfide bond links C107 and C344. Positions 114, 118, and 121 each coordinate [4Fe-4S] cluster. S-adenosyl-L-methionine contacts are provided by residues 168–169 (GE), S200, 222–224 (SIH), and N301. Residue C344 is the S-methylcysteine intermediate of the active site.

Belongs to the radical SAM superfamily. RlmN family. The cofactor is [4Fe-4S] cluster.

It is found in the cytoplasm. It carries out the reaction adenosine(2503) in 23S rRNA + 2 reduced [2Fe-2S]-[ferredoxin] + 2 S-adenosyl-L-methionine = 2-methyladenosine(2503) in 23S rRNA + 5'-deoxyadenosine + L-methionine + 2 oxidized [2Fe-2S]-[ferredoxin] + S-adenosyl-L-homocysteine. The enzyme catalyses adenosine(37) in tRNA + 2 reduced [2Fe-2S]-[ferredoxin] + 2 S-adenosyl-L-methionine = 2-methyladenosine(37) in tRNA + 5'-deoxyadenosine + L-methionine + 2 oxidized [2Fe-2S]-[ferredoxin] + S-adenosyl-L-homocysteine. Its function is as follows. Specifically methylates position 2 of adenine 2503 in 23S rRNA and position 2 of adenine 37 in tRNAs. m2A2503 modification seems to play a crucial role in the proofreading step occurring at the peptidyl transferase center and thus would serve to optimize ribosomal fidelity. The protein is Dual-specificity RNA methyltransferase RlmN of Shewanella sediminis (strain HAW-EB3).